We begin with the raw amino-acid sequence, 354 residues long: Guanine nucleotide-binding protein alpha-12 subunit (354 aa).

The G-alpha domain occupies 31–354 (QPLKLLLLGS…SLLMNVAEIL (324 aa)). Residues 34–47 (KLLLLGSGECGKST) are G1 motif. GTP-binding positions include 39–46 (GSGECGKS), 178–184 (LRVRVKT), 203–207 (DVGGQ), 272–275 (NKID), and Ala-329. The Mg(2+) site is built by Ser-46 and Thr-184. Residues 176–184 (DFLRVRVKT) form a G2 motif region. The interval 199-208 (FKLVDVGGQK) is G3 motif. The segment at 268 to 275 (VLFFNKID) is G4 motif. Residues 327–332 (TCALDS) form a G5 motif region.

Belongs to the G-alpha family. As to quaternary structure, g proteins are composed of 3 units; alpha, beta and gamma. The alpha chain contains the guanine nucleotide binding site.

Functionally, guanine nucleotide-binding proteins (G proteins) are involved as modulators or transducers in various transmembrane signaling systems. The protein is Guanine nucleotide-binding protein alpha-12 subunit (gpaL) of Dictyostelium discoideum (Social amoeba).